Reading from the N-terminus, the 562-residue chain is Putative transport protein NT01EI_2530 (562 aa).

6 helical membrane-spanning segments follow: residues 8-28 (LLTG…LCLG), 32-52 (LGSI…LLGQ), 66-86 (FMLF…SIFF), 94-114 (MLAL…GKLF), 118-138 (IGLT…LVGA), and 158-178 (HLSL…IFGA). RCK C-terminal domains follow at residues 202-288 (LDND…SFRN) and 290-373 (KEVF…RIGF). The next 5 membrane-spanning stretches (helical) occupy residues 383 to 403 (LLAF…TFQF), 406 to 426 (FSFG…LGFL), 443 to 463 (MVKE…AGAG), 477 to 497 (IAGL…GAFV), and 541 to 561 (IANV…PGVV).

It belongs to the AAE transporter (TC 2.A.81) family. YbjL subfamily.

It localises to the cell membrane. In Edwardsiella ictaluri (strain 93-146), this protein is Putative transport protein NT01EI_2530.